A 364-amino-acid polypeptide reads, in one-letter code: Hepatitis A virus cellular receptor 1 (364 aa).

Positions 1-20 are cleaved as a signal peptide; that stretch reads MHPQVVILSLILHLADSVAG. The Ig-like V-type domain occupies 21–121; that stretch reads SVKVGGEAGP…WFNDMKITVS (101 aa). The Extracellular portion of the chain corresponds to 21-295; sequence SVKVGGEAGP…SLLTANTTKG (275 aa). Disulfide bonds link cysteine 36–cysteine 105, cysteine 46–cysteine 57, and cysteine 52–cysteine 104. Asparagine 65 carries an N-linked (GlcNAc...) asparagine glycan. Tandem repeats lie at residues 138-143, 144-149, 150-155, 156-160, 161-165, 166-171, 172-177, 178-183, 184-189, 190-195, 196-201, and 202-207. A 12 X 6 AA approximate tandem repeats of V-P-T-T-T-T] region spans residues 138–207; it reads VPTVTTVRTS…TTTSVPVTTT (70 aa). The segment at 216–257 is disordered; sequence PLPRQNHEPVATSPSSPQPAETHPTTLQGAIRREPTSSPLYS. Positions 227–243 are enriched in polar residues; that stretch reads TSPSSPQPAETHPTTLQ. N-linked (GlcNAc...) asparagine glycans are attached at residues asparagine 263, asparagine 277, and asparagine 291. Residues 296–316 traverse the membrane as a helical segment; sequence IYAGVCISVLVLLALLGVIIA. The Cytoplasmic portion of the chain corresponds to 317–364; that stretch reads KKYFFKKEVQQLSVSFSSLQIKALQNAVEKEVQAEDNIYIENSLYATD. Glycyl lysine isopeptide (Lys-Gly) (interchain with G-Cter in ubiquitin) cross-links involve residues lysine 338 and lysine 346.

It belongs to the immunoglobulin superfamily. TIM family. Interacts with STAM. Interacts with SELPLG. In terms of assembly, (Microbial infection) Interacts with hepatitis A virus capsid proteins. As to quaternary structure, (Microbial infection) Interacts with Ebolavirus envelope glycoprotein GP. (Microbial infection) Interacts with Zika virus envelope protein E. Ubiquitinated at two lysine residues Lys-338 and Lys-346 on its cytoplasmic domain. Ubiquitination promotes receptor endocytosis and target receptors for lysosomal degradation and termination of receptor signaling. In terms of processing, (Microbial infection) Ubiquitination is required for Dengue virus endocytosis. Widely expressed, with highest levels in kidney and testis. Expressed by activated CD4+ T-cells during the development of helper T-cells responses.

It is found in the cell membrane. In terms of biological role, phosphatidylserine receptor that plays an important functional role in regulatory B-cells homeostasis including generation, expansion and suppressor functions. As P-selectin/SELPLG ligand, plays a specialized role in activated but not naive T-cell trafficking during inflammatory responses. Controls thereby T-cell accumulation in the inflamed central nervous system (CNS) and the induction of autoimmune disease. Also regulates expression of various anti-inflammatory cytokines and co-inhibitory ligands including IL10. Acts as a regulator of T-cell proliferation. May play a role in kidney injury and repair. (Microbial infection) Acts as a receptor for Hepatitis A virus. Functionally, (Microbial infection) Acts as a receptor for Ebolavirus and Marburg virus by binding exposed phosphatidyl-serine at the surface of virion membrane. Serves as a dual receptor for Ebolavirus by also interacting with envelope glycoprotein GP. Its function is as follows. (Microbial infection) Acts as a receptor for Dengue virus by binding exposed phosphatidyl-serine at the surface of virion membrane. TIM1 and Dengue virus are co-internalized during virus entry. In terms of biological role, (Microbial infection) Acts as a receptor for Zika virus by binding to envelope protein E. (Microbial infection) Plays a positive role in Chikungunya virus cell entry. The chain is Hepatitis A virus cellular receptor 1 (HAVCR1) from Homo sapiens (Human).